A 691-amino-acid polypeptide reads, in one-letter code: Elongation factor G (691 aa).

The 275-residue stretch at 8-282 (ERVRNIGIAA…AVIDYLPAPV (275 aa)) folds into the tr-type G domain. GTP contacts are provided by residues 17-24 (AHIDAGKT), 81-85 (DTPGH), and 135-138 (NKMD).

This sequence belongs to the TRAFAC class translation factor GTPase superfamily. Classic translation factor GTPase family. EF-G/EF-2 subfamily.

It is found in the cytoplasm. In terms of biological role, catalyzes the GTP-dependent ribosomal translocation step during translation elongation. During this step, the ribosome changes from the pre-translocational (PRE) to the post-translocational (POST) state as the newly formed A-site-bound peptidyl-tRNA and P-site-bound deacylated tRNA move to the P and E sites, respectively. Catalyzes the coordinated movement of the two tRNA molecules, the mRNA and conformational changes in the ribosome. This Synechococcus sp. (strain CC9605) protein is Elongation factor G.